Reading from the N-terminus, the 186-residue chain is Potassium-transporting ATPase KdpC subunit 1 (186 aa).

A helical membrane pass occupies residues 10-30 (LTIITMVLCGFLFPLAITLIG).

This sequence belongs to the KdpC family. In terms of assembly, the system is composed of three essential subunits: KdpA, KdpB and KdpC.

It localises to the cell membrane. Its function is as follows. Part of the high-affinity ATP-driven potassium transport (or Kdp) system, which catalyzes the hydrolysis of ATP coupled with the electrogenic transport of potassium into the cytoplasm. This subunit acts as a catalytic chaperone that increases the ATP-binding affinity of the ATP-hydrolyzing subunit KdpB by the formation of a transient KdpB/KdpC/ATP ternary complex. The polypeptide is Potassium-transporting ATPase KdpC subunit 1 (Staphylococcus aureus (strain Mu50 / ATCC 700699)).